Consider the following 310-residue polypeptide: Pantoate--beta-alanine ligase (310 aa).

Met32–His39 provides a ligand contact to ATP. The Proton donor role is filled by His39. A (R)-pantoate-binding site is contributed by Gln63. Position 63 (Gln63) interacts with beta-alanine. Gly175–Asp178 serves as a coordination point for ATP. Gln181 serves as a coordination point for (R)-pantoate. Residue Met212–Arg215 participates in ATP binding.

Belongs to the pantothenate synthetase family. As to quaternary structure, homodimer. As to expression, expressed in roots, cotyledons, leaves, stems, cauline leaves, stigma, sepals and petals.

The protein localises to the cytoplasm. It is found in the cytosol. The catalysed reaction is (R)-pantoate + beta-alanine + ATP = (R)-pantothenate + AMP + diphosphate + H(+). It functions in the pathway cofactor biosynthesis; (R)-pantothenate biosynthesis; (R)-pantothenate from (R)-pantoate and beta-alanine: step 1/1. Its activity is regulated as follows. Enzyme kinetics do not match Michaelis-Menten kinetics, suggesting allosteric behavior. Inhibited by high pantoate levels. Catalyzes the condensation of pantoate with beta-alanine to form pantothenate. Essential for panthotenate biosynthesis. This Arabidopsis thaliana (Mouse-ear cress) protein is Pantoate--beta-alanine ligase.